The following is a 180-amino-acid chain: Cytokinin-beta-glucosidase (180 aa).

As to expression, accumulates in young leaves and shoot tips.

In terms of biological role, hydrolyzes cytokinin glucosides thus liberating free cytokinins. The protein is Cytokinin-beta-glucosidase (TROLC) of Nicotiana tabacum (Common tobacco).